The primary structure comprises 366 residues: MSAPLKRTPLAEEHLAAGARMVDFGGWDMPLAYGSQLEEHHAVRQDAGMFDVSHMLNVDVGGADATAFLRRLVANDVARLATPGKALYSCMLNPQGGIIDDLIIYYFAPDQWRVVVNAGTADKDIAWMQRVAAADGFDVAIAPRRDLAMVAVQGPNARAKVWAARPAWQAASEPLAPFSAAAVEAGTLVARTGYTGEDGFEIVLPADAVVQLWRDLLAQGVRPCGLGARDTLRLEAGMNLYGQDMDELVHPDQAGLSWTVALKDEARRFVGRDAIEQFAVPRAFVGLKLQERGVMRAHMPVRCAQGMGELTSGTMSPTLGVSVGFARVPVGVQPGDAVEVEIRGKWVPALVCKLPFVRHGKAVEHS.

It belongs to the GcvT family. In terms of assembly, the glycine cleavage system is composed of four proteins: P, T, L and H.

The catalysed reaction is N(6)-[(R)-S(8)-aminomethyldihydrolipoyl]-L-lysyl-[protein] + (6S)-5,6,7,8-tetrahydrofolate = N(6)-[(R)-dihydrolipoyl]-L-lysyl-[protein] + (6R)-5,10-methylene-5,6,7,8-tetrahydrofolate + NH4(+). In terms of biological role, the glycine cleavage system catalyzes the degradation of glycine. The polypeptide is Aminomethyltransferase (Bordetella bronchiseptica (strain ATCC BAA-588 / NCTC 13252 / RB50) (Alcaligenes bronchisepticus)).